Reading from the N-terminus, the 131-residue chain is Small ribosomal subunit protein uS8 (131 aa).

It belongs to the universal ribosomal protein uS8 family. In terms of assembly, part of the 30S ribosomal subunit. Contacts proteins S5 and S12.

One of the primary rRNA binding proteins, it binds directly to 16S rRNA central domain where it helps coordinate assembly of the platform of the 30S subunit. The chain is Small ribosomal subunit protein uS8 from Porphyromonas gingivalis (strain ATCC 33277 / DSM 20709 / CIP 103683 / JCM 12257 / NCTC 11834 / 2561).